Consider the following 227-residue polypeptide: Octanoyltransferase (227 aa).

The BPL/LPL catalytic domain maps to Ala-43–Glu-218. Substrate is bound by residues Arg-82–His-89, Ser-149–Gly-151, and Gly-162–Ala-164. Cys-180 acts as the Acyl-thioester intermediate in catalysis.

Belongs to the LipB family.

The protein resides in the cytoplasm. The enzyme catalyses octanoyl-[ACP] + L-lysyl-[protein] = N(6)-octanoyl-L-lysyl-[protein] + holo-[ACP] + H(+). The protein operates within protein modification; protein lipoylation via endogenous pathway; protein N(6)-(lipoyl)lysine from octanoyl-[acyl-carrier-protein]: step 1/2. Its function is as follows. Catalyzes the transfer of endogenously produced octanoic acid from octanoyl-acyl-carrier-protein onto the lipoyl domains of lipoate-dependent enzymes. Lipoyl-ACP can also act as a substrate although octanoyl-ACP is likely to be the physiological substrate. The chain is Octanoyltransferase from Shewanella denitrificans (strain OS217 / ATCC BAA-1090 / DSM 15013).